The chain runs to 432 residues: Adenylosuccinate synthetase (432 aa).

Residues 12 to 18 (GDEGKGK) and 40 to 42 (GHT) each bind GTP. Aspartate 13 functions as the Proton acceptor in the catalytic mechanism. Positions 13 and 40 each coordinate Mg(2+). Residues 13 to 16 (DEGK), 38 to 41 (NAGH), threonine 132, arginine 146, glutamine 226, threonine 241, and arginine 305 each bind IMP. Histidine 41 functions as the Proton donor in the catalytic mechanism. 301-307 (TVTGRKR) is a binding site for substrate. Residues arginine 307, 333–335 (KLD), and 415–417 (STS) contribute to the GTP site.

It belongs to the adenylosuccinate synthetase family. Homodimer. Mg(2+) serves as cofactor.

The protein localises to the cytoplasm. The catalysed reaction is IMP + L-aspartate + GTP = N(6)-(1,2-dicarboxyethyl)-AMP + GDP + phosphate + 2 H(+). Its pathway is purine metabolism; AMP biosynthesis via de novo pathway; AMP from IMP: step 1/2. Its function is as follows. Plays an important role in the de novo pathway of purine nucleotide biosynthesis. Catalyzes the first committed step in the biosynthesis of AMP from IMP. In Chelativorans sp. (strain BNC1), this protein is Adenylosuccinate synthetase.